Reading from the N-terminus, the 344-residue chain is Ribosomal RNA large subunit methyltransferase Cfr (344 aa).

The active-site Proton acceptor is Glu90. The 234-residue stretch at 97–330 folds into the Radical SAM core domain; it reads KQGWESFCIS…ATVRTQFGSE (234 aa). Cys104 and Cys335 form a disulfide bridge. [4Fe-4S] cluster contacts are provided by Cys111, Cys115, and Cys118. S-adenosyl-L-methionine-binding positions include 157 to 158, Ser188, 211 to 213, and Asn292; these read GE and SLH. Cys335 serves as the catalytic S-methylcysteine intermediate.

It belongs to the radical SAM superfamily. RlmN family. Cfr subfamily. The cofactor is [4Fe-4S] cluster.

It is found in the cytoplasm. The enzyme catalyses adenosine(2503) in 23S rRNA + 2 reduced [2Fe-2S]-[ferredoxin] + 2 S-adenosyl-L-methionine = 8-methyladenosine(2503) in 23S rRNA + 5'-deoxyadenosine + L-methionine + 2 oxidized [2Fe-2S]-[ferredoxin] + S-adenosyl-L-homocysteine. In terms of biological role, specifically methylates position 8 of adenine 2503 in 23S rRNA. Confers resistance to some classes of antibiotics. This Clostridium botulinum (strain Hall / ATCC 3502 / NCTC 13319 / Type A) protein is Ribosomal RNA large subunit methyltransferase Cfr.